A 384-amino-acid chain; its full sequence is Methylthioribose-1-phosphate isomerase (384 aa).

Asp-255 serves as the catalytic Proton donor.

It belongs to the eIF-2B alpha/beta/delta subunits family. MtnA subfamily.

It is found in the cytoplasm. The protein localises to the nucleus. It carries out the reaction 5-(methylsulfanyl)-alpha-D-ribose 1-phosphate = 5-(methylsulfanyl)-D-ribulose 1-phosphate. Its pathway is amino-acid biosynthesis; L-methionine biosynthesis via salvage pathway; L-methionine from S-methyl-5-thio-alpha-D-ribose 1-phosphate: step 1/6. Functionally, catalyzes the interconversion of methylthioribose-1-phosphate (MTR-1-P) into methylthioribulose-1-phosphate (MTRu-1-P). The chain is Methylthioribose-1-phosphate isomerase (mri1) from Talaromyces marneffei (strain ATCC 18224 / CBS 334.59 / QM 7333) (Penicillium marneffei).